We begin with the raw amino-acid sequence, 555 residues long: Phosphomethylpyrimidine synthase (555 aa).

Substrate-binding positions include N191, M220, Y249, H285, 305–307 (SRG), 346–349 (DGLR), and E385. H389 serves as a coordination point for Zn(2+). Y412 lines the substrate pocket. Residue H453 participates in Zn(2+) binding. [4Fe-4S] cluster contacts are provided by C533, C536, and C541.

The protein belongs to the ThiC family. Homodimer. Requires [4Fe-4S] cluster as cofactor.

It carries out the reaction 5-amino-1-(5-phospho-beta-D-ribosyl)imidazole + S-adenosyl-L-methionine = 4-amino-2-methyl-5-(phosphooxymethyl)pyrimidine + CO + 5'-deoxyadenosine + formate + L-methionine + 3 H(+). Its pathway is cofactor biosynthesis; thiamine diphosphate biosynthesis. Functionally, catalyzes the synthesis of the hydroxymethylpyrimidine phosphate (HMP-P) moiety of thiamine from aminoimidazole ribotide (AIR) in a radical S-adenosyl-L-methionine (SAM)-dependent reaction. The chain is Phosphomethylpyrimidine synthase from Ehrlichia ruminantium (strain Welgevonden).